We begin with the raw amino-acid sequence, 624 residues long: Low affinity potassium transport system protein Kup (624 aa).

The next 12 membrane-spanning stretches (helical) occupy residues 9–29 (LPAI…TSPL), 49–69 (VFGF…IKYL), 103–123 (VIMG…TPAI), 137–157 (PQLD…LFMI), 165–185 (VGKL…GLGL), 213–233 (VSFI…ALYA), 247–267 (WFTV…ALLL), 276–296 (PFFL…AALA), 337–357 (IYIP…IVIV), 365–385 (LAAA…ILST), 398–418 (FVAL…TANL), and 421–441 (LLSG…VMTT).

Belongs to the HAK/KUP transporter (TC 2.A.72) family.

Its subcellular location is the cell inner membrane. The catalysed reaction is K(+)(in) + H(+)(in) = K(+)(out) + H(+)(out). In terms of biological role, responsible for the low-affinity transport of potassium into the cell. Likely operates as a K(+):H(+) symporter. The polypeptide is Low affinity potassium transport system protein Kup (Shigella dysenteriae serotype 1 (strain Sd197)).